Consider the following 442-residue polypeptide: Probable serine/threonine-protein kinase kinase DDB_G0280643 (442 aa).

In terms of domain architecture, Protein kinase spans 74-398 (IDPNTIVDCG…VNEILESPYF (325 aa)). Residues 80–88 (VDCGTNGIM) and lysine 103 contribute to the ATP site. Aspartate 231 serves as the catalytic Proton acceptor.

The protein belongs to the protein kinase superfamily. CMGC Ser/Thr protein kinase family. MAP kinase subfamily.

It catalyses the reaction L-seryl-[protein] + ATP = O-phospho-L-seryl-[protein] + ADP + H(+). The catalysed reaction is L-threonyl-[protein] + ATP = O-phospho-L-threonyl-[protein] + ADP + H(+). The sequence is that of Probable serine/threonine-protein kinase kinase DDB_G0280643 from Dictyostelium discoideum (Social amoeba).